We begin with the raw amino-acid sequence, 237 residues long: MGKNEQKDPNVYFFVPNLIGFTRVFLVLISLYFMSWHPNYCTIVYLYSSLLDAFDGWAARKLHQATNFGAILDMVTDRCATSCLLCFLCAAYPKYAIIFQLLVSLDLASHYMHMYSTLHQGASSHKTVTKKHNWMLRLYYGNNKVLFIFCAANEMFFVALYLLSFTPRTPPKLGYLPVPSFIYSTGELPLSYPTLLAVLCGPICLAKQIINVVQLVNAANALVKMDVEQRRAAKKLQ.

The Cytoplasmic segment spans residues 1 to 12; it reads MGKNEQKDPNVY. Residues 13 to 33 form a helical membrane-spanning segment; it reads FFVPNLIGFTRVFLVLISLYF. The Lumenal segment spans residues 34-41; it reads MSWHPNYC. The chain crosses the membrane as a helical span at residues 42–62; sequence TIVYLYSSLLDAFDGWAARKL. Mg(2+)-binding residues include Asp52 and Asp55. Positions 56, 60, and 66 each coordinate a CDP-1,2-diacyl-sn-glycerol. Over 63–71 the chain is Cytoplasmic; the sequence is HQATNFGAI. The helical transmembrane segment at 72-92 threads the bilayer; the sequence is LDMVTDRCATSCLLCFLCAAY. Asp73 and Asp77 together coordinate Mg(2+). Catalysis depends on Asp77, which acts as the Proton acceptor. The Lumenal portion of the chain corresponds to 93 to 94; it reads PK. A helical transmembrane segment spans residues 95–115; the sequence is YAIIFQLLVSLDLASHYMHMY. Residues 116–144 lie on the Cytoplasmic side of the membrane; it reads STLHQGASSHKTVTKKHNWMLRLYYGNNK. A helical membrane pass occupies residues 145-165; that stretch reads VLFIFCAANEMFFVALYLLSF. At 166–185 the chain is on the lumenal side; that stretch reads TPRTPPKLGYLPVPSFIYST. A helical transmembrane segment spans residues 186 to 206; sequence GELPLSYPTLLAVLCGPICLA. The Cytoplasmic segment spans residues 207–237; the sequence is KQIINVVQLVNAANALVKMDVEQRRAAKKLQ.

This sequence belongs to the CDP-alcohol phosphatidyltransferase class-I family. Requires Mn(2+) as cofactor. The cofactor is Mg(2+).

It localises to the microsome membrane. The protein localises to the endoplasmic reticulum membrane. It is found in the golgi apparatus membrane. The protein resides in the mitochondrion outer membrane. It carries out the reaction a CDP-1,2-diacyl-sn-glycerol + myo-inositol = a 1,2-diacyl-sn-glycero-3-phospho-(1D-myo-inositol) + CMP + H(+). Catalyzes the synthesis of phosphatidylinositol (PtdIns). In Schizosaccharomyces pombe (strain 972 / ATCC 24843) (Fission yeast), this protein is CDP-diacylglycerol--inositol 3-phosphatidyltransferase (pis1).